Here is a 463-residue protein sequence, read N- to C-terminus: Glycine--tRNA ligase (463 aa).

Arg102 lines the substrate pocket. The interval 113–134 (KHGHPPPNGLADIRDPDTGEPG) is disordered. Glu165 contacts substrate. ATP-binding positions include 197–199 (RNE), 207–212 (FRTREF), 284–285 (EL), and 328–331 (GLTR). 212-216 (FEQME) is a binding site for substrate. Residue 324 to 328 (EPAAG) participates in substrate binding.

This sequence belongs to the class-II aminoacyl-tRNA synthetase family. As to quaternary structure, homodimer.

The protein localises to the cytoplasm. It carries out the reaction tRNA(Gly) + glycine + ATP = glycyl-tRNA(Gly) + AMP + diphosphate. Its function is as follows. Catalyzes the attachment of glycine to tRNA(Gly). The sequence is that of Glycine--tRNA ligase from Mycolicibacterium paratuberculosis (strain ATCC BAA-968 / K-10) (Mycobacterium paratuberculosis).